The primary structure comprises 129 residues: KVFERCELARTLKKLGLDDYKGVSLANWLCLTKWESGYNTKATNYNPGSESTDYGIFQINSKFWCNDGKTPDAVDGCHVSCSELMENDIEKAVACAKHIVSEQGITAWVAWKSHCRDHDVSSYVEGCTL.

Residues 1 to 129 (KVFERCELAR…VSSYVEGCTL (129 aa)) enclose the C-type lysozyme domain. 4 cysteine pairs are disulfide-bonded: cysteine 6–cysteine 127, cysteine 30–cysteine 115, cysteine 65–cysteine 81, and cysteine 77–cysteine 95. Residues glutamate 35 and aspartate 53 contribute to the active site.

The protein belongs to the glycosyl hydrolase 22 family. In terms of assembly, monomer.

The catalysed reaction is Hydrolysis of (1-&gt;4)-beta-linkages between N-acetylmuramic acid and N-acetyl-D-glucosamine residues in a peptidoglycan and between N-acetyl-D-glucosamine residues in chitodextrins.. In terms of biological role, lysozymes have primarily a bacteriolytic function; those in tissues and body fluids are associated with the monocyte-macrophage system and enhance the activity of immunoagents. This Capra hircus (Goat) protein is Lysozyme C-1.